A 931-amino-acid chain; its full sequence is Myocardin-related transcription factor A (931 aa).

Residues 1–256 (MPPLKSPAAF…KQDRGAPPMD (256 aa)) are mediates interaction with SCAI and ACTB. Ser-6 carries the post-translational modification Phosphoserine. The tract at residues 6–23 (SPAAFHEQRRSLERARTE) is intervening spacer sequence 1. The stretch at 24–49 (DYLKRKIRSRPERSELVRMHILEETS) is one RPEL 1 repeat. Residues 27-65 (KRKIRSRPERSELVRMHILEETSAEPSLQAKQLKLKRAR) carry the Bipartite Nuclear localization signal motif. The segment at 50–67 (AEPSLQAKQLKLKRARLA) is intervening spacer sequence 2. The stretch at 68-93 (DDLNEKIAQRPGPMELVEKNILPVES) is one RPEL 2 repeat. Disordered regions lie at residues 110–256 (ADSS…PPMD) and 290–344 (PAPP…GALP). Ser-124, Ser-139, and Ser-156 each carry phosphoserine. Residues 151–162 (SATSASPTQVVS) show a composition bias toward polar residues. Residues 180–189 (PPLPPPPLLP) are compositionally biased toward pro residues. The span at 191 to 215 (SLTNGTTIPTAKSTPTLIKQSQPKS) shows a compositional bias: polar residues. The segment covering 216-231 (ASEKSQRSKKAKELKP) has biased composition (basic and acidic residues). Thr-305 carries the post-translational modification Phosphothreonine. Ser-310 and Ser-312 each carry phosphoserine. The segment covering 310-320 (SLSTTNSSSSS) has biased composition (low complexity). A Phosphothreonine modification is found at Thr-313. Ser-317, Ser-320, and Ser-333 each carry phosphoserine. The SAP domain occupies 347–381 (LDDMKVAELKQELKLRSLPVSGTKTELIERLRAYQ). Residues Ser-385 and Ser-446 each carry the phosphoserine modification. Positions 444 to 476 (FGSTGSTPPVSPTPSERSLLSTGDENSTPGDTF) are disordered. Thr-447 is modified (phosphothreonine). Residue Ser-449 is modified to Phosphoserine. Thr-450 is subject to Phosphothreonine. At Ser-454 the chain carries Phosphoserine. At Thr-456 the chain carries Phosphothreonine. A Phosphoserine modification is found at Ser-458. The segment covering 459–473 (ERSLLSTGDENSTPG) has biased composition (polar residues). Phosphoserine is present on residues Ser-482, Ser-492, Ser-507, and Ser-511. Residues 515-563 (RAELEGRDKDQMLQEKDKQIEALTRMLRQKQQLVERLKLQLEQEKRAQQ) adopt a coiled-coil conformation. Disordered stretches follow at residues 558-577 (EKRAQQPAPAPAPLGTPVKQ), 674-746 (KNAD…SSSQ), and 763-816 (ADFK…RLED). A compositionally biased stretch (low complexity) spans 678 to 694 (SPGLSSGSPQQPSSQPG). Residues Ser-685, Ser-691, and Ser-695 each carry the phosphoserine modification. Positions 732 to 746 (MSQQPKQQENGSSSQ) are enriched in polar residues. Positions 763–778 (ADFKEPPSLPGKEKPS) are enriched in basic and acidic residues. Residues 784-799 (GSPLAAQPSPSAELPQ) are compositionally biased toward low complexity. 3 positions are modified to phosphoserine: Ser-792, Ser-807, and Ser-859.

As to quaternary structure, interacts with SRF, forming the SRF-MRTFA nuclear complex which binds the 5'-CArG-3' consensus motif (CArG box) on DNA via SRF. Interacts (via RPEL repeats) with globular actin (G-actin), thereby regulating its subcellular location and activity of the complex formed with SRF. Either forms a trivalent (by binding three G-actin monomers) or pentavalent (by binding five G-actin monomers) complex with G-actin. Forms a nuclear ternary complex with SCAI and SRF, leading to suppress MRTFA-induced SRF transcriptional activity. Interacts with beta-actin (ACTB); interaction with ACTB prevents interaction with SCAI. Interacts with MRTFB. Post-translationally, phosphorylation at Ser-6 by Erk inhibits binding of globular actin (G-actin), unmasking the nuclear localization signal (NLS) and promoting nuclear import. In terms of tissue distribution, ubiquitously expressed, has been detected in lung, placenta, small intestine, liver, kidney, spleen, thymus, colon, muscle, heart and brain. Expressed in peripheral blood mononuclear cells (at protein level).

It is found in the cytoplasm. The protein localises to the nucleus. Transcription coactivator that associates with the serum response factor (SRF) transcription factor to control expression of genes regulating the cytoskeleton during development, morphogenesis and cell migration. The SRF-MRTFA complex activity responds to Rho GTPase-induced changes in cellular globular actin (G-actin) concentration, thereby coupling cytoskeletal gene expression to cytoskeletal dynamics. MRTFA binds G-actin via its RPEL repeats, regulating activity of the MRTFA-SRF complex. Activity is also regulated by filamentous actin (F-actin) in the nucleus. The sequence is that of Myocardin-related transcription factor A from Homo sapiens (Human).